The following is a 412-amino-acid chain: ORC1-type DNA replication protein 2 (412 aa).

Residues 61-65, Tyr207, and Arg219 each bind ATP; that span reads VGKTA.

Belongs to the CDC6/cdc18 family.

In terms of biological role, involved in regulation of DNA replication. The chain is ORC1-type DNA replication protein 2 (cdc6b) from Haloarcula marismortui (strain ATCC 43049 / DSM 3752 / JCM 8966 / VKM B-1809) (Halobacterium marismortui).